Reading from the N-terminus, the 3434-residue chain is Genome polyprotein (3434 aa).

The interval 2–15 is interaction with host EXOC1; sequence SKKPGGPGKPRVVN. At 2 to 110 the chain is on the cytoplasmic side; sequence SKKPGGPGKP…KQKKRGGSET (109 aa). The segment at 37-72 is hydrophobic; homodimerization of capsid protein C; sequence LLDGRGPIRFVLALLAFFRFTALAPTKALMRRWKSV. The propeptide at 106–125 is ER anchor for the capsid protein C, removed in mature form by serine protease NS3; sequence GGSETSVLMLIFMLIGFAAA. A helical transmembrane segment spans residues 111–131; it reads SVLMLIFMLIGFAAALKLSTF. Residues 132-251 lie on the Extracellular side of the membrane; it reads QGKIMMTVNA…ATRYLTKTEN (120 aa). Asn140 carries N-linked (GlcNAc...) asparagine; by host glycosylation. The helical transmembrane segment at 252–272 threads the bilayer; sequence WIIRNPGYALVAVVLGWMLGS. Over 273–277 the chain is Cytoplasmic; that stretch reads NTGQK. The helical transmembrane segment at 278-292 threads the bilayer; sequence VIFTVLLLLVAPAYS. At 293 to 745 the chain is on the extracellular side; sequence FNCLGMSSRD…QVFGGAFRTL (453 aa). Cystine bridges form between Cys295–Cys322, Cys352–Cys408, Cys352–Cys413, Cys366–Cys397, Cys384–Cys408, and Cys384–Cys413. The segment at 390–403 is fusion peptide; the sequence is DRGWGNGCGLFGKG. Residue Asn446 is glycosylated (N-linked (GlcNAc...) asparagine; by host). Disulfide bonds link Cys482-Cys580 and Cys597-Cys628. Residues 746-766 form a helical membrane-spanning segment; it reads FGGMSWISPGLLGALLLWMGV. The Cytoplasmic segment spans residues 767 to 772; that stretch reads NARDKS. The helical transmembrane segment at 773 to 793 threads the bilayer; that stretch reads IALAFLATGGVLLFLATNVHA. Over 794–1218 the chain is Extracellular; it reads DTGCAIDITR…AFAESNNGGD (425 aa). Intrachain disulfides connect Cys797-Cys808 and Cys848-Cys936. N-linked (GlcNAc...) asparagine; by host glycans are attached at residues Asn923 and Asn968. Cystine bridges form between Cys972–Cys1016, Cys1073–Cys1122, Cys1084–Cys1105, and Cys1106–Cys1109. Residue Asn1000 is glycosylated (N-linked (GlcNAc...) (high mannose) asparagine; by host). The helical transmembrane segment at 1219–1239 threads the bilayer; it reads VIHLALIAVFKVQPAFLVASL. Topologically, residues 1240 to 1249 are cytoplasmic; that stretch reads TRSRWTNQEN. A helical transmembrane segment spans residues 1250–1270; the sequence is LVLVLGAAFFQMAASDLELTI. Over 1271 to 1286 the chain is Lumenal; the sequence is PGLLNSAATAWMVLRA. Residues 1287-1307 form a helical membrane-spanning segment; sequence MAFPSTSAIAMPMLAMLAPGM. Arg1308 is a topological domain (cytoplasmic). Residues 1309 to 1329 form a helical membrane-spanning segment; the sequence is MLHLDTYRIVLLLIGICSLLN. The Lumenal portion of the chain corresponds to 1330–1340; the sequence is ERRRSVEKKKG. Residues 1341–1361 traverse the membrane as a helical segment; the sequence is AVLIGLALTSTGYFSPTIMAA. Over 1362 to 1373 the chain is Cytoplasmic; it reads GLMICNPNKKRG. The helical transmembrane segment at 1374–1394 threads the bilayer; the sequence is WPATEVLTAVGLMFAIVGGLA. The Lumenal portion of the chain corresponds to 1395-1397; it reads ELD. Residues 1398-1418 form a helical membrane-spanning segment; the sequence is IDSMSVPFTIAGLMLVSYVIS. Residues 1419–1475 are Cytoplasmic-facing; it reads GKATDMWLERAADVSWEAGAAITGTSERLDVQLDDDGDFHLLNDPGVPWKIWVLRMT. An interacts with and activates NS3 protease region spans residues 1426–1465; it reads LERAADVSWEAGAAITGTSERLDVQLDDDGDFHLLNDPGV. Residues 1476–1496 constitute an intramembrane region (helical); sequence CLSVAAITPRAILPSAFGYWL. Topologically, residues 1497–2172 are cytoplasmic; that stretch reads TLKYTKRGGV…RMALEELPDA (676 aa). In terms of domain architecture, Peptidase S7 spans 1504–1681; that stretch reads GGVFWDTPSP…ERVEEPVPEA (178 aa). Active-site charge relay system; for serine protease NS3 activity residues include His1554, Asp1578, and Ser1638. The Helicase ATP-binding domain maps to 1684 to 1840; it reads PEMLKKRQLT…DTNSPVHDVS (157 aa). The interval 1688 to 1691 is important for RNA-binding; it reads KKRQ. 1697–1704 is an ATP binding site; the sequence is LHPGAGKT. The DEAH box signature appears at 1788–1791; that stretch reads DEAH. Residues 1851–2016 form the Helicase C-terminal domain; sequence GFEWITDYAG…GLVAQLYGPE (166 aa). Residue Lys1892 is modified to N6-acetyllysine; by host. The interval 1958–1979 is disordered; that stretch reads AAQRRGRVGRNPSQIGDEYHYG. A regulates the ATPase activity of NS3 helicase region spans residues 2167-2171; it reads EELPD. The helical transmembrane segment at 2173–2193 threads the bilayer; sequence LETITLIAALGVMTAGFFLLM. At 2194-2197 the chain is on the lumenal side; the sequence is MQRK. The helical intramembrane region spans 2198–2218; sequence GIGKLGLGALVLVVATFFLWM. The Lumenal segment spans residues 2219–2220; it reads SD. Residues 2221 to 2241 form a helical membrane-spanning segment; it reads VSGTKIAGVLLLALLMMVVLI. The Cytoplasmic segment spans residues 2242–2256; the sequence is PEPEKQRSQTDNQLA. A helical membrane pass occupies residues 2257–2271; sequence VFLICVLLVVGLVAA. Residues 2272–2309 lie on the Lumenal side of the membrane; sequence NEYGMLERTKTDIRNLFGKSLIEENEVHIPPFDFFTLD. Residues 2310 to 2330 constitute an intramembrane region (helical); the sequence is LKPATAWALYGGSTVVLTPLI. Topologically, residues 2331-2366 are lumenal; it reads KHLVTSQYVTTSLASINAQAGSLFTLPKGIPFTDFD. The chain crosses the membrane as a helical span at residues 2367-2394; that stretch reads LSVALVFLGCWGQVTLTTLIMATILVTL. Over 2395–2446 the chain is Cytoplasmic; the sequence is HYGYLLPGWQAEALRAAQKRTAAGIMKNAVVDGIVATDVPELERTTPQMQKR. A helical membrane pass occupies residues 2447 to 2467; that stretch reads LGQILLVLASVAAVCVNPRIT. The Lumenal portion of the chain corresponds to 2468 to 2498; it reads TIREAGILCTAAALTLWDNNASAAWNSTTAT. Residues 2499-2519 form a helical membrane-spanning segment; that stretch reads GLCHVMRGSWIAGASIAWTLI. Topologically, residues 2520–3434 are cytoplasmic; it reads KNAEKPAFKR…ETHVSEDRVL (915 aa). One can recognise an mRNA cap 0-1 NS5-type MT domain in the interval 2530 to 2795; sequence GRAGGRTLGE…DVNLGSGTRA (266 aa). Ser2585 lines the S-adenosyl-L-methionine pocket. Ser2585 carries the post-translational modification Phosphoserine. The active-site For 2'-O-MTase activity is the Lys2590. 6 residues coordinate S-adenosyl-L-methionine: Gly2615, Trp2616, Thr2633, Lys2634, Asp2660, and Val2661. Asp2675 acts as the For 2'-O-MTase activity in catalysis. Ile2676 lines the S-adenosyl-L-methionine pocket. Catalysis depends on for 2'-O-MTase activity residues Lys2711 and Glu2747. S-adenosyl-L-methionine is bound at residue Tyr2749. The Zn(2+) site is built by Glu2969, His2973, Cys2978, and Cys2981. A RdRp catalytic domain is found at 3059-3211; that stretch reads GKIYADDTAG…KPLDDRFSTA (153 aa). His3246, Cys3262, and Cys3381 together coordinate Zn(2+).

In the N-terminal section; belongs to the class I-like SAM-binding methyltransferase superfamily. mRNA cap 0-1 NS5-type methyltransferase family. In terms of assembly, homodimer. Interacts (via N-terminus) with host EXOC1 (via C-terminus); this interaction results in EXOC1 degradation through the proteasome degradation pathway. As to quaternary structure, forms heterodimers with envelope protein E in the endoplasmic reticulum and Golgi. Homodimer; in the endoplasmic reticulum and Golgi. Interacts with protein prM. Interacts with non-structural protein 1. In terms of assembly, homodimer; Homohexamer when secreted. Interacts with envelope protein E. NS1 interacts with NS4B. Interacts with host complement protein CFH; this interaction leads to the degradation of C3. As to quaternary structure, interacts (via N-terminus) with serine protease NS3. Forms a heterodimer with serine protease NS3. May form homooligomers. In terms of assembly, forms a heterodimer with NS2B. Interacts with non-structural protein 2A (via N-terminus). Interacts with NS4B. Interacts with unphosphorylated RNA-directed RNA polymerase NS5; this interaction stimulates RNA-directed RNA polymerase NS5 guanylyltransferase activity. As to quaternary structure, interacts with serine protease NS3. Homodimer. Interacts with host STAT2; this interaction inhibits the phosphorylation of the latter, and, when all viral proteins are present (polyprotein), targets STAT2 for degradation. Interacts with serine protease NS3. In terms of processing, specific enzymatic cleavages in vivo yield mature proteins. Cleavages in the lumen of endoplasmic reticulum are performed by host signal peptidase, whereas cleavages in the cytoplasmic side are performed by serine protease NS3. Signal cleavage at the 2K-4B site requires a prior NS3 protease-mediated cleavage at the 4A-2K site. Cleaved in post-Golgi vesicles by a host furin, releasing the mature small envelope protein M, and peptide pr. This cleavage is incomplete as up to 30% of viral particles still carry uncleaved prM. Post-translationally, N-glycosylated. In terms of processing, N-glycosylated. The excreted form is glycosylated and this is required for efficient secretion of the protein from infected cells. Acetylated by host KAT5. Acetylation modulates NS3 RNA-binding and unwinding activities and plays an important positive role for viral replication. Post-translationally, phosphorylated on serines residues. This phosphorylation may trigger NS5 nuclear localization.

The protein localises to the virion. It is found in the host nucleus. It localises to the host cytoplasm. The protein resides in the host perinuclear region. Its subcellular location is the secreted. The protein localises to the virion membrane. It is found in the host endoplasmic reticulum membrane. It carries out the reaction Selective hydrolysis of -Xaa-Xaa-|-Yaa- bonds in which each of the Xaa can be either Arg or Lys and Yaa can be either Ser or Ala.. It catalyses the reaction RNA(n) + a ribonucleoside 5'-triphosphate = RNA(n+1) + diphosphate. The enzyme catalyses a ribonucleoside 5'-triphosphate + H2O = a ribonucleoside 5'-diphosphate + phosphate + H(+). The catalysed reaction is ATP + H2O = ADP + phosphate + H(+). It carries out the reaction a 5'-end (5'-triphosphoguanosine)-ribonucleoside in mRNA + S-adenosyl-L-methionine = a 5'-end (N(7)-methyl 5'-triphosphoguanosine)-ribonucleoside in mRNA + S-adenosyl-L-homocysteine. It catalyses the reaction a 5'-end (N(7)-methyl 5'-triphosphoguanosine)-ribonucleoside in mRNA + S-adenosyl-L-methionine = a 5'-end (N(7)-methyl 5'-triphosphoguanosine)-(2'-O-methyl-ribonucleoside) in mRNA + S-adenosyl-L-homocysteine + H(+). Functionally, plays a role in virus budding by binding to the cell membrane and gathering the viral RNA into a nucleocapsid that forms the core of a mature virus particle. During virus entry, may induce genome penetration into the host cytoplasm after hemifusion induced by the surface proteins. Can migrate to the cell nucleus where it modulates host functions. Overcomes the anti-viral effects of host EXOC1 by sequestering and degrading the latter through the proteasome degradation pathway. Its function is as follows. Inhibits RNA silencing by interfering with host Dicer. Prevents premature fusion activity of envelope proteins in trans-Golgi by binding to envelope protein E at pH6.0. After virion release in extracellular space, gets dissociated from E dimers. In terms of biological role, acts as a chaperone for envelope protein E during intracellular virion assembly by masking and inactivating envelope protein E fusion peptide. prM is the only viral peptide matured by host furin in the trans-Golgi network probably to avoid catastrophic activation of the viral fusion activity in acidic Golgi compartment prior to virion release. prM-E cleavage is inefficient, and many virions are only partially matured. These uncleaved prM would play a role in immune evasion. Functionally, may play a role in virus budding. Exerts cytotoxic effects by activating a mitochondrial apoptotic pathway through M ectodomain. May display a viroporin activity. Its function is as follows. Binds to host cell surface receptor and mediates fusion between viral and cellular membranes. Envelope protein is synthesized in the endoplasmic reticulum in the form of heterodimer with protein prM. They play a role in virion budding in the ER, and the newly formed immature particle is covered with 60 spikes composed of heterodimer between precursor prM and envelope protein E. The virion is transported to the Golgi apparatus where the low pH causes dissociation of PrM-E heterodimers and formation of E homodimers. prM-E cleavage is inefficient, and many virions are only partially matured. These uncleaved prM would play a role in immune evasion. Involved in immune evasion, pathogenesis and viral replication. Once cleaved off the polyprotein, is targeted to three destinations: the viral replication cycle, the plasma membrane and the extracellular compartment. Essential for viral replication. Required for formation of the replication complex and recruitment of other non-structural proteins to the ER-derived membrane structures. Excreted as a hexameric lipoparticle that plays a role against host immune response. Antagonizing the complement function. Binds to the host macrophages and dendritic cells. Inhibits signal transduction originating from Toll-like receptor 3 (TLR3). In terms of biological role, component of the viral RNA replication complex that functions in virion assembly and antagonizes the host alpha/beta interferon antiviral response. Functionally, required cofactor for the serine protease function of NS3. May have membrane-destabilizing activity and form viroporins. Its function is as follows. Displays three enzymatic activities: serine protease, NTPase and RNA helicase. NS3 serine protease, in association with NS2B, performs its autocleavage and cleaves the polyprotein at dibasic sites in the cytoplasm: C-prM, NS2A-NS2B, NS2B-NS3, NS3-NS4A, NS4A-2K and NS4B-NS5. NS3 RNA helicase binds RNA and unwinds dsRNA in the 3' to 5' direction. Regulates the ATPase activity of the NS3 helicase activity. NS4A allows NS3 helicase to conserve energy during unwinding. In terms of biological role, functions as a signal peptide for NS4B and is required for the interferon antagonism activity of the latter. Functionally, induces the formation of ER-derived membrane vesicles where the viral replication takes place. Inhibits interferon (IFN)-induced host STAT1 phosphorylation and nuclear translocation, thereby preventing the establishment of cellular antiviral state by blocking the IFN-alpha/beta pathway. Inhibits STAT2 translocation in the nucleus after IFN-alpha treatment. Its function is as follows. Replicates the viral (+) and (-) RNA genome, and performs the capping of genomes in the cytoplasm. NS5 methylates viral RNA cap at guanine N-7 and ribose 2'-O positions. Besides its role in RNA genome replication, also prevents the establishment of cellular antiviral state by blocking the interferon-alpha/beta (IFN-alpha/beta) signaling pathway. Inhibits host TYK2 and STAT2 phosphorylation, thereby preventing activation of JAK-STAT signaling pathway. This chain is Genome polyprotein, found in Culex annulirostris (Common banded mosquito).